The sequence spans 357 residues: S-adenosylmethionine:tRNA ribosyltransferase-isomerase (357 aa).

The protein belongs to the QueA family. In terms of assembly, monomer.

It localises to the cytoplasm. It catalyses the reaction 7-aminomethyl-7-carbaguanosine(34) in tRNA + S-adenosyl-L-methionine = epoxyqueuosine(34) in tRNA + adenine + L-methionine + 2 H(+). It participates in tRNA modification; tRNA-queuosine biosynthesis. In terms of biological role, transfers and isomerizes the ribose moiety from AdoMet to the 7-aminomethyl group of 7-deazaguanine (preQ1-tRNA) to give epoxyqueuosine (oQ-tRNA). The sequence is that of S-adenosylmethionine:tRNA ribosyltransferase-isomerase from Buchnera aphidicola subsp. Acyrthosiphon pisum (strain APS) (Acyrthosiphon pisum symbiotic bacterium).